Consider the following 306-residue polypeptide: Pantothenate kinase (306 aa).

91–98 is a binding site for ATP; sequence GSVAVGKS.

This sequence belongs to the prokaryotic pantothenate kinase family.

The protein resides in the cytoplasm. The enzyme catalyses (R)-pantothenate + ATP = (R)-4'-phosphopantothenate + ADP + H(+). It participates in cofactor biosynthesis; coenzyme A biosynthesis; CoA from (R)-pantothenate: step 1/5. This Streptococcus pyogenes serotype M5 (strain Manfredo) protein is Pantothenate kinase.